The sequence spans 423 residues: Phthiocerol/phthiodiolone dimycocerosyl transferase (423 aa).

The active-site Proton acceptor is the His-125.

The protein belongs to the acyltransferase PapA5 family. In terms of assembly, monomer. Interacts directly with the acyl carrier protein (ACP) domain of the mycocerosic acid synthase (mas) protein.

The enzyme catalyses 2 a mycocerosyl-[mycocerosic acid synthase] + a phthiocerol = a dimycocerosyl phthiocerol + 2 holo-[mycocerosic acid synthase].. It carries out the reaction 2 a mycocerosyl-[mycocerosic acid synthase] + a phthiodiolone = a dimycocerosyl phthiodiolone + 2 holo-[mycocerosic acid synthase].. The catalysed reaction is 2 a mycocerosyl-[mycocerosic acid synthase] + a phenolphthiocerol = a dimycocerosyl phenolphthiocerol + 2 holo-[mycocerosic acid synthase].. Catalyzes diesterification of phthiocerol, phthiodiolone, and phenolphthiocerol with mycocerosic acids, the final step in the phthiocerol, phthiodiolone and phenolphthiocerol dimycocerosate esters (PDIM) synthesis. Can directly transfer the mycocerosate bound to the mycocerosic acid synthase (mas) onto the substrate alcohols. This Mycobacterium leprae (strain TN) protein is Phthiocerol/phthiodiolone dimycocerosyl transferase (papA5).